Consider the following 366-residue polypeptide: Spermidine/putrescine import ATP-binding protein PotA (366 aa).

Residues 8–239 form the ABC transporter domain; it reads IRFENVTKQF…PINKFVADFI (232 aa). 41–48 contributes to the ATP binding site; that stretch reads GPSGCGKT.

This sequence belongs to the ABC transporter superfamily. Spermidine/putrescine importer (TC 3.A.1.11.1) family. The complex is composed of two ATP-binding proteins (PotA), two transmembrane proteins (PotB and PotC) and a solute-binding protein (PotD).

It is found in the cell membrane. It catalyses the reaction ATP + H2O + polyamine-[polyamine-binding protein]Side 1 = ADP + phosphate + polyamineSide 2 + [polyamine-binding protein]Side 1.. Functionally, part of the ABC transporter complex PotABCD involved in spermidine/putrescine import. Responsible for energy coupling to the transport system. The chain is Spermidine/putrescine import ATP-binding protein PotA from Listeria innocua serovar 6a (strain ATCC BAA-680 / CLIP 11262).